The following is a 224-amino-acid chain: Urease accessory protein UreF (224 aa).

Belongs to the UreF family. As to quaternary structure, ureD, UreF and UreG form a complex that acts as a GTP-hydrolysis-dependent molecular chaperone, activating the urease apoprotein by helping to assemble the nickel containing metallocenter of UreC. The UreE protein probably delivers the nickel.

Its subcellular location is the cytoplasm. Its function is as follows. Required for maturation of urease via the functional incorporation of the urease nickel metallocenter. The sequence is that of Urease accessory protein UreF from Ectopseudomonas mendocina (strain ymp) (Pseudomonas mendocina).